Here is a 493-residue protein sequence, read N- to C-terminus: UDP-N-acetylmuramoyl-L-alanyl-D-glutamate--2,6-diaminopimelate ligase (493 aa).

2 residues coordinate UDP-N-acetyl-alpha-D-muramoyl-L-alanyl-D-glutamate: Leu-30 and Ser-32. 117-123 is an ATP binding site; that stretch reads GTNGKTT. UDP-N-acetyl-alpha-D-muramoyl-L-alanyl-D-glutamate-binding positions include Asn-158, 159–160, Ser-186, Gln-192, and Arg-194; that span reads TT. Lys-226 carries the post-translational modification N6-carboxylysine. Residues Arg-388, 412–415, Gly-463, and Glu-467 contribute to the meso-2,6-diaminopimelate site; that span reads DNPR. A Meso-diaminopimelate recognition motif motif is present at residues 412-415; that stretch reads DNPR.

Belongs to the MurCDEF family. MurE subfamily. It depends on Mg(2+) as a cofactor. In terms of processing, carboxylation is probably crucial for Mg(2+) binding and, consequently, for the gamma-phosphate positioning of ATP.

The protein resides in the cytoplasm. It carries out the reaction UDP-N-acetyl-alpha-D-muramoyl-L-alanyl-D-glutamate + meso-2,6-diaminopimelate + ATP = UDP-N-acetyl-alpha-D-muramoyl-L-alanyl-gamma-D-glutamyl-meso-2,6-diaminopimelate + ADP + phosphate + H(+). It functions in the pathway cell wall biogenesis; peptidoglycan biosynthesis. Functionally, catalyzes the addition of meso-diaminopimelic acid to the nucleotide precursor UDP-N-acetylmuramoyl-L-alanyl-D-glutamate (UMAG) in the biosynthesis of bacterial cell-wall peptidoglycan. This is UDP-N-acetylmuramoyl-L-alanyl-D-glutamate--2,6-diaminopimelate ligase from Vibrio parahaemolyticus serotype O3:K6 (strain RIMD 2210633).